Reading from the N-terminus, the 95-residue chain is Co-chaperonin GroES (95 aa).

This sequence belongs to the GroES chaperonin family. Heptamer of 7 subunits arranged in a ring. Interacts with the chaperonin GroEL.

The protein localises to the cytoplasm. Its function is as follows. Together with the chaperonin GroEL, plays an essential role in assisting protein folding. The GroEL-GroES system forms a nano-cage that allows encapsulation of the non-native substrate proteins and provides a physical environment optimized to promote and accelerate protein folding. GroES binds to the apical surface of the GroEL ring, thereby capping the opening of the GroEL channel. This chain is Co-chaperonin GroES, found in Oleidesulfovibrio alaskensis (strain ATCC BAA-1058 / DSM 17464 / G20) (Desulfovibrio alaskensis).